The following is a 510-amino-acid chain: NAD(P)H-quinone oxidoreductase subunit 2 B, chloroplastic (510 aa).

13 helical membrane-spanning segments follow: residues 24–44 (LLLF…GLIL), 57–77 (IPWL…ALLF), 99–119 (IFQF…VEYI), 124–144 (MAIT…MFLC), 149–169 (LITI…LSGY), 183–203 (YLLM…WLYG), 227–247 (PGIS…LSPA), 295–315 (WHLL…LIAI), 323–343 (MLAY…IVGD), 347–367 (GYAS…GTFA), 395–415 (ALSL…AGFF), 418–438 (LHLF…IGLL), and 482–502 (LSMI…NPII).

The protein belongs to the complex I subunit 2 family. In terms of assembly, NDH is composed of at least 16 different subunits, 5 of which are encoded in the nucleus.

The protein resides in the plastid. It is found in the chloroplast thylakoid membrane. The catalysed reaction is a plastoquinone + NADH + (n+1) H(+)(in) = a plastoquinol + NAD(+) + n H(+)(out). The enzyme catalyses a plastoquinone + NADPH + (n+1) H(+)(in) = a plastoquinol + NADP(+) + n H(+)(out). Its function is as follows. NDH shuttles electrons from NAD(P)H:plastoquinone, via FMN and iron-sulfur (Fe-S) centers, to quinones in the photosynthetic chain and possibly in a chloroplast respiratory chain. The immediate electron acceptor for the enzyme in this species is believed to be plastoquinone. Couples the redox reaction to proton translocation, and thus conserves the redox energy in a proton gradient. In Cucumis sativus (Cucumber), this protein is NAD(P)H-quinone oxidoreductase subunit 2 B, chloroplastic.